The following is a 79-amino-acid chain: Calcium/calmodulin-dependent protein kinase II inhibitor 2 (79 aa).

Residues 43-69 form an inhibitory domain region; sequence KRPPKLGQIGRAKRVVIEDDRIDEVLK.

The protein belongs to the CAMK2N family.

The protein resides in the nucleus. It localises to the cytoplasm. The protein localises to the cytosol. In terms of biological role, potent and specific cellular inhibitor of CaM-kinase II (CAMK2). Traps Ca(2+)/calmodulin on CAMK2. In Xenopus laevis (African clawed frog), this protein is Calcium/calmodulin-dependent protein kinase II inhibitor 2 (camk2n2).